The sequence spans 641 residues: Sodium-dependent nutrient amino acid transporter 1 (641 aa).

The segment at 1 to 38 (MELKGVQPSNGSSNGSGNGATNAASTEKTDAEKPTAER) is disordered. Over 1–40 (MELKGVQPSNGSSNGSGNGATNAASTEKTDAEKPTAERTN) the chain is Cytoplasmic. A compositionally biased stretch (low complexity) spans 9–26 (SNGSSNGSGNGATNAAST). The segment covering 27-36 (EKTDAEKPTA) has biased composition (basic and acidic residues). A run of 3 helical transmembrane segments spans residues 41–61 (WGNG…LGNV), 74–94 (GAFL…MYYL), and 111–131 (SVVP…ICII). N-linked (GlcNAc...) asparagine glycans are attached at residues asparagine 185 and asparagine 190. The next 9 helical transmembrane spans lie at 229–249 (PDWK…LVIM), 258–278 (AAYF…IRAV), 307–327 (AVVQ…MFAS), 341–361 (IVTT…FAIL), 401–421 (LFSV…IVAL), 447–467 (VCGF…ILTL), 474–494 (TYVV…VYGL), 516–536 (CWSF…MVTI), and 552–572 (IAGW…GLWY).

This sequence belongs to the sodium:neurotransmitter symporter (SNF) (TC 2.A.22) family. As to expression, in larvae, weak specific expression in the anterior midgut just proximal to the gastric caeca reproductive rudiments, common ureters of the Malpighian tubules, and distal swollen portion of the anterior pair of Malpighian tubules. Expression is also seen in the imaginal disks of the head; brain hemispheres and the ventral ganglion. Stronger expression in the posterior midgut.

It is found in the membrane. Its function is as follows. Unusual broad substrate spectrum amino acid:sodium cotransporter that promotes absorption of the D isomers of essential amino acids. Neutral amino acids are the preferred substrates, especially methionine and phenylalanine. This is Sodium-dependent nutrient amino acid transporter 1 (NAAT1) from Drosophila melanogaster (Fruit fly).